A 72-amino-acid polypeptide reads, in one-letter code: MAHPSQLGFQDAASPVMEELLHFHDHALMIVFLISTLVLYIIVAMVSTKLTNKHILDSQEVEIVWTILPAVI.

The Mitochondrial intermembrane portion of the chain corresponds to 1–14; that stretch reads MAHPSQLGFQDAAS. The helical transmembrane segment at 15 to 45 threads the bilayer; it reads PVMEELLHFHDHALMIVFLISTLVLYIIVAM. The Mitochondrial matrix segment spans residues 46–72; that stretch reads VSTKLTNKHILDSQEVEIVWTILPAVI.

The protein belongs to the cytochrome c oxidase subunit 2 family. In terms of assembly, component of the cytochrome c oxidase (complex IV, CIV), a multisubunit enzyme composed of 14 subunits. The complex is composed of a catalytic core of 3 subunits MT-CO1, MT-CO2 and MT-CO3, encoded in the mitochondrial DNA, and 11 supernumerary subunits COX4I, COX5A, COX5B, COX6A, COX6B, COX6C, COX7A, COX7B, COX7C, COX8 and NDUFA4, which are encoded in the nuclear genome. The complex exists as a monomer or a dimer and forms supercomplexes (SCs) in the inner mitochondrial membrane with NADH-ubiquinone oxidoreductase (complex I, CI) and ubiquinol-cytochrome c oxidoreductase (cytochrome b-c1 complex, complex III, CIII), resulting in different assemblies (supercomplex SCI(1)III(2)IV(1) and megacomplex MCI(2)III(2)IV(2)). Found in a complex with TMEM177, COA6, COX18, COX20, SCO1 and SCO2. Interacts with TMEM177 in a COX20-dependent manner. Interacts with COX20. Interacts with COX16. Requires Cu cation as cofactor.

The protein localises to the mitochondrion inner membrane. It catalyses the reaction 4 Fe(II)-[cytochrome c] + O2 + 8 H(+)(in) = 4 Fe(III)-[cytochrome c] + 2 H2O + 4 H(+)(out). Its function is as follows. Component of the cytochrome c oxidase, the last enzyme in the mitochondrial electron transport chain which drives oxidative phosphorylation. The respiratory chain contains 3 multisubunit complexes succinate dehydrogenase (complex II, CII), ubiquinol-cytochrome c oxidoreductase (cytochrome b-c1 complex, complex III, CIII) and cytochrome c oxidase (complex IV, CIV), that cooperate to transfer electrons derived from NADH and succinate to molecular oxygen, creating an electrochemical gradient over the inner membrane that drives transmembrane transport and the ATP synthase. Cytochrome c oxidase is the component of the respiratory chain that catalyzes the reduction of oxygen to water. Electrons originating from reduced cytochrome c in the intermembrane space (IMS) are transferred via the dinuclear copper A center (CU(A)) of subunit 2 and heme A of subunit 1 to the active site in subunit 1, a binuclear center (BNC) formed by heme A3 and copper B (CU(B)). The BNC reduces molecular oxygen to 2 water molecules using 4 electrons from cytochrome c in the IMS and 4 protons from the mitochondrial matrix. This is Cytochrome c oxidase subunit 2 (mt-co2) from Atractosteus spatula (Alligator gar).